Reading from the N-terminus, the 482-residue chain is Pyruvate kinase (482 aa).

Arg-37 contacts substrate. Residues Asn-39, Ser-41, and Asp-71 each coordinate K(+). Residue 39–42 (NFSH) participates in ATP binding. ATP-binding residues include Arg-78 and Lys-160. Glu-222 contacts Mg(2+). Substrate contacts are provided by Gly-245, Asp-246, and Thr-278. A Mg(2+)-binding site is contributed by Asp-246.

The protein belongs to the pyruvate kinase family. Homotetramer. The cofactor is Mg(2+). K(+) is required as a cofactor.

It catalyses the reaction pyruvate + ATP = phosphoenolpyruvate + ADP + H(+). The protein operates within carbohydrate degradation; glycolysis; pyruvate from D-glyceraldehyde 3-phosphate: step 5/5. This Agrobacterium vitis (Rhizobium vitis) protein is Pyruvate kinase (ttuE).